The following is a 118-amino-acid chain: IgW heavy chain V region W26 (118 aa).

Positions 1 to 109 constitute an Ig-like domain; sequence NIVLTQPESA…PQWGYWGSGT (109 aa). Cysteine 22 and cysteine 93 are joined by a disulfide.

Expressed mainly in lymphoid tissues including spleen, epigonal organ and circulating lymphocytes.

In Heterodontus francisci (Horn shark), this protein is IgW heavy chain V region W26.